Here is a 525-residue protein sequence, read N- to C-terminus: GMP synthase [glutamine-hydrolyzing] (525 aa).

The Glutamine amidotransferase type-1 domain maps to 9-207 (RILILDFGSQ…VRDICQCEAL (199 aa)). The active-site Nucleophile is the cysteine 86. Residues histidine 181 and glutamate 183 contribute to the active site. The GMPS ATP-PPase domain occupies 208–400 (WTPAKIIDDA…LGLPYDMLYR (193 aa)). 235-241 (SGGVDSS) serves as a coordination point for ATP.

In terms of assembly, homodimer.

It carries out the reaction XMP + L-glutamine + ATP + H2O = GMP + L-glutamate + AMP + diphosphate + 2 H(+). It functions in the pathway purine metabolism; GMP biosynthesis; GMP from XMP (L-Gln route): step 1/1. Catalyzes the synthesis of GMP from XMP. The chain is GMP synthase [glutamine-hydrolyzing] from Salmonella arizonae (strain ATCC BAA-731 / CDC346-86 / RSK2980).